A 726-amino-acid polypeptide reads, in one-letter code: Catalase-peroxidase (726 aa).

A disordered region spans residues 1–33 (MSTSDDIHNTTATGKCPFHQGGHDQSAGAGTTT). Residues 105-226 (WHGAGTYRSI…LGATEMGLIY (122 aa)) constitute a cross-link (tryptophyl-tyrosyl-methioninium (Trp-Tyr) (with M-252)). The Proton acceptor role is filled by His-106. The segment at residues 226-252 (YVNPEGPDHSGEPLSAAAAIRATFGNM) is a cross-link (tryptophyl-tyrosyl-methioninium (Tyr-Met) (with W-105)). His-267 is a heme b binding site.

The protein belongs to the peroxidase family. Peroxidase/catalase subfamily. Homodimer or homotetramer. It depends on heme b as a cofactor. In terms of processing, formation of the three residue Trp-Tyr-Met cross-link is important for the catalase, but not the peroxidase activity of the enzyme.

It carries out the reaction H2O2 + AH2 = A + 2 H2O. It catalyses the reaction 2 H2O2 = O2 + 2 H2O. Its function is as follows. Bifunctional enzyme with both catalase and broad-spectrum peroxidase activity. This chain is Catalase-peroxidase, found in Escherichia coli (strain K12 / DH10B).